A 518-amino-acid polypeptide reads, in one-letter code: GMP synthase [glutamine-hydrolyzing] (518 aa).

The Glutamine amidotransferase type-1 domain occupies R6–D200. Residue C84 is the Nucleophile of the active site. Active-site residues include H175 and E177. The GMPS ATP-PPase domain maps to W201–R393. S228–S234 is a binding site for ATP.

Homodimer.

The enzyme catalyses XMP + L-glutamine + ATP + H2O = GMP + L-glutamate + AMP + diphosphate + 2 H(+). It functions in the pathway purine metabolism; GMP biosynthesis; GMP from XMP (L-Gln route): step 1/1. In terms of biological role, catalyzes the synthesis of GMP from XMP. The protein is GMP synthase [glutamine-hydrolyzing] of Cereibacter sphaeroides (strain ATCC 17029 / ATH 2.4.9) (Rhodobacter sphaeroides).